Consider the following 95-residue polypeptide: Integration host factor subunit beta (95 aa).

It belongs to the bacterial histone-like protein family. As to quaternary structure, heterodimer of an alpha and a beta chain.

Its function is as follows. This protein is one of the two subunits of integration host factor, a specific DNA-binding protein that functions in genetic recombination as well as in transcriptional and translational control. This Erwinia tasmaniensis (strain DSM 17950 / CFBP 7177 / CIP 109463 / NCPPB 4357 / Et1/99) protein is Integration host factor subunit beta.